A 314-amino-acid chain; its full sequence is Homoserine kinase (314 aa).

96–106 (PIGSGLGSSAC) is an ATP binding site.

Belongs to the GHMP kinase family. Homoserine kinase subfamily.

Its subcellular location is the cytoplasm. The enzyme catalyses L-homoserine + ATP = O-phospho-L-homoserine + ADP + H(+). The protein operates within amino-acid biosynthesis; L-threonine biosynthesis; L-threonine from L-aspartate: step 4/5. Catalyzes the ATP-dependent phosphorylation of L-homoserine to L-homoserine phosphate. This is Homoserine kinase from Haemophilus influenzae (strain PittEE).